The following is a 142-amino-acid chain: Ribosome maturation factor RimP (142 aa).

The protein belongs to the RimP family.

The protein localises to the cytoplasm. In terms of biological role, required for maturation of 30S ribosomal subunits. This is Ribosome maturation factor RimP from Nitratiruptor sp. (strain SB155-2).